Consider the following 833-residue polypeptide: Protein translocase subunit SecA (833 aa).

Residues Gln87, 105-109 (GEGKT), and Asp494 each bind ATP. Positions 789–816 (PAAVAYSGGEAEAGPAQPHREDPKVGRN) are disordered. Residues 806–815 (PHREDPKVGR) are compositionally biased toward basic and acidic residues. Zn(2+)-binding residues include Cys819, Cys821, Cys830, and Cys831.

The protein belongs to the SecA family. As to quaternary structure, monomer and homodimer. Part of the essential Sec protein translocation apparatus which comprises SecA, SecYEG and auxiliary proteins SecDF-YajC and YidC. Zn(2+) is required as a cofactor.

The protein localises to the cell inner membrane. It localises to the cytoplasm. The catalysed reaction is ATP + H2O + cellular proteinSide 1 = ADP + phosphate + cellular proteinSide 2.. Part of the Sec protein translocase complex. Interacts with the SecYEG preprotein conducting channel. Has a central role in coupling the hydrolysis of ATP to the transfer of proteins into and across the cell membrane, serving as an ATP-driven molecular motor driving the stepwise translocation of polypeptide chains across the membrane. This Nitratidesulfovibrio vulgaris (strain ATCC 29579 / DSM 644 / CCUG 34227 / NCIMB 8303 / VKM B-1760 / Hildenborough) (Desulfovibrio vulgaris) protein is Protein translocase subunit SecA.